A 32-amino-acid polypeptide reads, in one-letter code: Giant hemoglobin AIV chain (32 aa).

This sequence belongs to the globin family. As to quaternary structure, giant hemoglobin is composed of four heme-containing chains (AI to AIV), and two linker chains (AV and AVI).

The protein is Giant hemoglobin AIV chain of Lamellibrachia sp. (Deep-sea giant tube worm).